Consider the following 134-residue polypeptide: Transcription antitermination protein NusB (134 aa).

It belongs to the NusB family.

Involved in transcription antitermination. Required for transcription of ribosomal RNA (rRNA) genes. Binds specifically to the boxA antiterminator sequence of the ribosomal RNA (rrn) operons. In Halalkalibacterium halodurans (strain ATCC BAA-125 / DSM 18197 / FERM 7344 / JCM 9153 / C-125) (Bacillus halodurans), this protein is Transcription antitermination protein NusB.